Here is a 215-residue protein sequence, read N- to C-terminus: 3-isopropylmalate dehydratase small subunit (215 aa).

It belongs to the LeuD family. LeuD type 1 subfamily. In terms of assembly, heterodimer of LeuC and LeuD.

It catalyses the reaction (2R,3S)-3-isopropylmalate = (2S)-2-isopropylmalate. Its pathway is amino-acid biosynthesis; L-leucine biosynthesis; L-leucine from 3-methyl-2-oxobutanoate: step 2/4. Functionally, catalyzes the isomerization between 2-isopropylmalate and 3-isopropylmalate, via the formation of 2-isopropylmaleate. The polypeptide is 3-isopropylmalate dehydratase small subunit (Cellvibrio japonicus (strain Ueda107) (Pseudomonas fluorescens subsp. cellulosa)).